The chain runs to 158 residues: Transcription elongation factor GreA (158 aa).

The stretch at 1-67 forms a coiled coil; sequence MSNNIPLTKE…FIEGRIQELQ (67 aa).

This sequence belongs to the GreA/GreB family.

Necessary for efficient RNA polymerase transcription elongation past template-encoded arresting sites. The arresting sites in DNA have the property of trapping a certain fraction of elongating RNA polymerases that pass through, resulting in locked ternary complexes. Cleavage of the nascent transcript by cleavage factors such as GreA or GreB allows the resumption of elongation from the new 3'terminus. GreA releases sequences of 2 to 3 nucleotides. In Trichlorobacter lovleyi (strain ATCC BAA-1151 / DSM 17278 / SZ) (Geobacter lovleyi), this protein is Transcription elongation factor GreA.